A 469-amino-acid polypeptide reads, in one-letter code: Pup--protein ligase (469 aa).

Mg(2+) is bound at residue glutamate 9. Arginine 53 provides a ligand contact to ATP. Tyrosine 55 lines the Mg(2+) pocket. Catalysis depends on aspartate 57, which acts as the Proton acceptor. A Mg(2+)-binding site is contributed by glutamate 63. Threonine 66 and tryptophan 430 together coordinate ATP.

It belongs to the Pup ligase/Pup deamidase family. Pup-conjugating enzyme subfamily.

It carries out the reaction ATP + [prokaryotic ubiquitin-like protein]-L-glutamate + [protein]-L-lysine = ADP + phosphate + N(6)-([prokaryotic ubiquitin-like protein]-gamma-L-glutamyl)-[protein]-L-lysine.. Its pathway is protein degradation; proteasomal Pup-dependent pathway. It participates in protein modification; protein pupylation. In terms of biological role, catalyzes the covalent attachment of the prokaryotic ubiquitin-like protein modifier Pup to the proteasomal substrate proteins, thereby targeting them for proteasomal degradation. This tagging system is termed pupylation. The ligation reaction involves the side-chain carboxylate of the C-terminal glutamate of Pup and the side-chain amino group of a substrate lysine. This is Pup--protein ligase from Kocuria rhizophila (strain ATCC 9341 / DSM 348 / NBRC 103217 / DC2201).